Here is a 383-residue protein sequence, read N- to C-terminus: Interleukin-13 receptor subunit alpha-2 (383 aa).

Residues 1 to 21 (MAFVHIRCLCFILLCTITGYS) form the signal peptide. The Extracellular portion of the chain corresponds to 22–334 (LEIKVNPPQD…WEGYTGPDSK (313 aa)). 3 consecutive Fibronectin type-III domains span residues 28–128 (PPQD…SDEG), 131–219 (ETKI…PIRS), and 234–332 (PPEF…TGPD). A disulfide bond links cysteine 59 and cysteine 107. The N-linked (GlcNAc...) asparagine glycan is linked to asparagine 109. A disulfide bond links cysteine 139 and cysteine 149. The N-linked (GlcNAc...) asparagine glycan is linked to asparagine 162. Residues cysteine 178 and cysteine 191 are joined by a disulfide bond. N-linked (GlcNAc...) asparagine glycans are attached at residues asparagine 209 and asparagine 293. A disulfide bond links cysteine 263 and cysteine 310. The WSXWS motif motif lies at 316–320 (WSEWS). A helical transmembrane segment spans residues 335 to 355 (IIFIVPVCLFFIFLLLLLCLI). Residues 356-383 (VEKEEPEPTLSLHVDLNKEVCAYEDTLC) are Cytoplasmic-facing.

Belongs to the type I cytokine receptor family. Type 5 subfamily. In terms of assembly, interacts with IL4RA. Interacts with high affinity to interleukin-13 (IL13), but not to interleukin-4 (IL4). Post-translationally, cleaved by MMP8 leading to a soluble form that is also able to interact with IL13.

It localises to the cell membrane. It is found in the secreted. In terms of biological role, cell surface receptor that plays a role in the regulation of IL-13-mediated responses. Functions as a decoy receptor that inhibits IL-13- and IL-4-mediated signal transduction via the JAK-STAT pathway and thereby modulates immune responses and inflammation. Serves as a functional signaling receptor for IL-13 in an alternative pathway involving AP-1 ultimately leading to the production of TGFB1. This chain is Interleukin-13 receptor subunit alpha-2 (Il13ra2), found in Mus musculus (Mouse).